The primary structure comprises 240 residues: Uridylate kinase (240 aa).

ATP-binding positions include 15-18, G58, and R62; that span reads KISG. UMP contacts are provided by residues D77 and 138–145; that span reads TGNPLFTT. Positions 165, 171, and 174 each coordinate ATP.

This sequence belongs to the UMP kinase family. As to quaternary structure, homohexamer.

The protein resides in the cytoplasm. It catalyses the reaction UMP + ATP = UDP + ADP. It participates in pyrimidine metabolism; CTP biosynthesis via de novo pathway; UDP from UMP (UMPK route): step 1/1. With respect to regulation, inhibited by UTP. Its function is as follows. Catalyzes the reversible phosphorylation of UMP to UDP. The chain is Uridylate kinase from Buchnera aphidicola subsp. Schizaphis graminum (strain Sg).